A 62-amino-acid chain; its full sequence is NRWYCNSAAGGVGGAAVCGLAGYVGEAKENIAGEVRKGWGMAGGFTHNKACKSFPGSGWASG.

It is found in the secreted. Functionally, bacteriocin active against the Gram-negative bacteria S.enteritidis, S.choleraesuis, S.typhimurium, S.gallinarum, E.coli O157:H7, Y.enterocolitica, C.freundii, K.pneumoniae, S.dysentriae, P.aeruginosa, P.mirabilis, M.morganii, C.jejuni and 20 other Campylobacter isolates, and the Gram-positive bacteria S.aureus, S.epidermidis and L.monocytogenes. This is Enterocin E-760 from Enterococcus sp.